Consider the following 316-residue polypeptide: Vacuolar membrane protein YNL058C (316 aa).

The interval 32–60 (KPTSSVVSETSSKSLPSLTSSAFSTSSGA) is disordered. The helical transmembrane segment at 93-113 (VYIAVGAVIGAIFISILIWWL) threads the bilayer. Residues Ser148, Ser256, and Ser276 each carry the phosphoserine modification. A disordered region spans residues 240–304 (EEEERKLNLN…KAHKRQAPSM (65 aa)). Basic and acidic residues predominate over residues 256 to 271 (SPERKEKKINSMEGYH).

It belongs to the PRM5 family.

The protein resides in the vacuole membrane. In Saccharomyces cerevisiae (strain ATCC 204508 / S288c) (Baker's yeast), this protein is Vacuolar membrane protein YNL058C.